Consider the following 400-residue polypeptide: Dual specificity mitogen-activated protein kinase kinase 2 (400 aa).

Position 1 is an N-acetylmethionine (Met1). Phosphoserine is present on Ser23. The Protein kinase domain maps to 72–369 (FERISELGAG…LKLLTNHAFI (298 aa)). Residues 78–86 (LGAGNGGVV) and Lys101 each bind ATP. The active-site Proton acceptor is Asp194. Phosphoserine; by RAF is present on residues Ser222 and Ser226. The segment at 282–310 (PVVDGADGEPHSVSPRPRPPGRPISGHGM) is disordered. Ser293, Ser295, and Ser306 each carry phosphoserine. 2 positions are modified to phosphothreonine: Thr394 and Thr396.

The protein belongs to the protein kinase superfamily. STE Ser/Thr protein kinase family. MAP kinase kinase subfamily. In terms of assembly, interacts with MORG1. Interacts with SGK1. Interacts with KSR1. Interacts with KSR1 and BRAF; the interaction with KSR1 mediates KSR1-BRAF dimerization. Interacts with GLS. Mg(2+) is required as a cofactor. Post-translationally, MAPKK is itself dependent on Ser/Thr phosphorylation for activity catalyzed by MAP kinase kinase kinases (RAF or MEKK1). Phosphorylated by MAP2K1/MEK1. As to expression, expressed abundantly in the adult brain and muscle.

The protein resides in the cytoplasm. It is found in the membrane. It catalyses the reaction L-seryl-[protein] + ATP = O-phospho-L-seryl-[protein] + ADP + H(+). The catalysed reaction is L-threonyl-[protein] + ATP = O-phospho-L-threonyl-[protein] + ADP + H(+). The enzyme catalyses L-tyrosyl-[protein] + ATP = O-phospho-L-tyrosyl-[protein] + ADP + H(+). Functionally, catalyzes the concomitant phosphorylation of a threonine and a tyrosine residue in a Thr-Glu-Tyr sequence located in MAP kinases. Activates the ERK1 and ERK2 MAP kinases. Activates BRAF in a KSR1 or KSR2-dependent manner; by binding to KSR1 or KSR2 releases the inhibitory intramolecular interaction between KSR1 or KSR2 protein kinase and N-terminal domains which promotes KSR1 or KSR2-BRAF dimerization and BRAF activation. The polypeptide is Dual specificity mitogen-activated protein kinase kinase 2 (Map2k2) (Rattus norvegicus (Rat)).